The following is a 644-amino-acid chain: Arginine--tRNA ligase (644 aa).

The short motif at A129–H139 is the 'HIGH' region element.

This sequence belongs to the class-I aminoacyl-tRNA synthetase family.

It is found in the cytoplasm. The enzyme catalyses tRNA(Arg) + L-arginine + ATP = L-arginyl-tRNA(Arg) + AMP + diphosphate. In Aeropyrum pernix (strain ATCC 700893 / DSM 11879 / JCM 9820 / NBRC 100138 / K1), this protein is Arginine--tRNA ligase (argS).